The following is a 448-amino-acid chain: JmjC domain-containing protein D (448 aa).

Positions 305–448 (EQIPQLRNDI…SLSQSFSIFP (144 aa)) constitute a JmjC domain.

The polypeptide is JmjC domain-containing protein D (jcdD) (Dictyostelium discoideum (Social amoeba)).